A 617-amino-acid chain; its full sequence is Dihydroxy-acid dehydratase (617 aa).

Asp81 is a binding site for Mg(2+). Residue Cys122 coordinates [2Fe-2S] cluster. Residues Asp123 and Lys124 each coordinate Mg(2+). Lys124 bears the N6-carboxylysine mark. Cys195 is a binding site for [2Fe-2S] cluster. Glu491 provides a ligand contact to Mg(2+). Ser517 serves as the catalytic Proton acceptor.

Belongs to the IlvD/Edd family. Homodimer. [2Fe-2S] cluster is required as a cofactor. The cofactor is Mg(2+).

The catalysed reaction is (2R)-2,3-dihydroxy-3-methylbutanoate = 3-methyl-2-oxobutanoate + H2O. It carries out the reaction (2R,3R)-2,3-dihydroxy-3-methylpentanoate = (S)-3-methyl-2-oxopentanoate + H2O. Its pathway is amino-acid biosynthesis; L-isoleucine biosynthesis; L-isoleucine from 2-oxobutanoate: step 3/4. It participates in amino-acid biosynthesis; L-valine biosynthesis; L-valine from pyruvate: step 3/4. In terms of biological role, functions in the biosynthesis of branched-chain amino acids. Catalyzes the dehydration of (2R,3R)-2,3-dihydroxy-3-methylpentanoate (2,3-dihydroxy-3-methylvalerate) into 2-oxo-3-methylpentanoate (2-oxo-3-methylvalerate) and of (2R)-2,3-dihydroxy-3-methylbutanoate (2,3-dihydroxyisovalerate) into 2-oxo-3-methylbutanoate (2-oxoisovalerate), the penultimate precursor to L-isoleucine and L-valine, respectively. The chain is Dihydroxy-acid dehydratase from Rhodospirillum rubrum (strain ATCC 11170 / ATH 1.1.1 / DSM 467 / LMG 4362 / NCIMB 8255 / S1).